We begin with the raw amino-acid sequence, 232 residues long: Large ribosomal subunit protein uL1 (232 aa).

Belongs to the universal ribosomal protein uL1 family. Part of the 50S ribosomal subunit.

Its function is as follows. Binds directly to 23S rRNA. The L1 stalk is quite mobile in the ribosome, and is involved in E site tRNA release. In terms of biological role, protein L1 is also a translational repressor protein, it controls the translation of the L11 operon by binding to its mRNA. The sequence is that of Large ribosomal subunit protein uL1 from Methylorubrum populi (strain ATCC BAA-705 / NCIMB 13946 / BJ001) (Methylobacterium populi).